The primary structure comprises 386 residues: Probable family 17 glucosidase SCW4 (386 aa).

Residues 1–19 (MRLSNLIASASLLSAATLA) form the signal peptide. The propeptide occupies 20–30 (APANHEHKDKR). A disordered region spans residues 88–127 (ENNSQVSAAASPASSSAATSTQSSSSSQASSSSSSGEDVS). N-linked (GlcNAc...) asparagine glycosylation occurs at N89. Catalysis depends on E323, which acts as the Nucleophile.

It belongs to the glycosyl hydrolase 17 family. In terms of processing, N-glycosylated.

The protein localises to the secreted. It localises to the cell wall. Functionally, glucanases possibly play a role in cell expansion during growth, in cell-cell fusion during mating, and in spore release during sporulation. The protein is Probable family 17 glucosidase SCW4 (SCW4) of Saccharomyces cerevisiae (strain ATCC 204508 / S288c) (Baker's yeast).